A 369-amino-acid polypeptide reads, in one-letter code: Maltose/maltodextrin import ATP-binding protein MalK (369 aa).

The region spanning 4–234 (VTLRNVCKSY…PKNRFVAGFI (231 aa)) is the ABC transporter domain. An ATP-binding site is contributed by 36–43 (GPSGCGKS).

Belongs to the ABC transporter superfamily. Maltooligosaccharide importer (TC 3.A.1.1.1) family. The complex is composed of two ATP-binding proteins (MalK), two transmembrane proteins (MalG and MalK) and a solute-binding protein (MalE).

Its subcellular location is the cell inner membrane. The enzyme catalyses D-maltose(out) + ATP + H2O = D-maltose(in) + ADP + phosphate + H(+). In terms of biological role, part of the ABC transporter complex MalEFGK involved in maltose/maltodextrin import. Responsible for energy coupling to the transport system. The protein is Maltose/maltodextrin import ATP-binding protein MalK of Aliivibrio fischeri (strain ATCC 700601 / ES114) (Vibrio fischeri).